The sequence spans 104 residues: Circadian clock oscillator protein KaiB (104 aa).

The protein belongs to the KaiB family. As to quaternary structure, the KaiABC complex composition changes during the circadian cycle to control KaiC phosphorylation. Complexes KaiC(6), KaiA(2-4):KaiC(6), KaiB(6):KaiC(6) and KaiC(6):KaiB(6):KaiA(12) are among the most important forms, many form cooperatively. Undergoes a major conformational rearrangment; in the free state forms homotetramers as a dimer of dimers. When bound to the CI domain of KaiC switches to a monomeric thioredoxin-fold (KaiB(fs)). KaiB(fs) binds CikA, leading it to dephosphorylate phospho-RpaA.

Key component of the KaiABC oscillator complex, which constitutes the main circadian regulator in cyanobacteria. Complex composition changes during the circadian cycle to control KaiC phosphorylation. KaiA stimulates KaiC autophosphorylation, while KaiB sequesters KaiA, leading to KaiC autodephosphorylation. Phospho-Ser-431 KaiC accumulation triggers binding of KaiB to form the KaiB(6):KaiC(6) complex, leading to changes in output regulators CikA and SasA. KaiB switches to a thioredoxin-like fold (KaiB(fs)) when bound to KaiC. KaiB(6):KaiC(6) formation exposes a site for KaiA binding that sequesters KaiA from KaiC, making the KaiC(6):KaiB(6):KaiA(12) complex that results in KaiC autodephosphorylation. In terms of biological role, a metamorphic protein which reversibly switches between an inactive tetrameric fold and a rare, thioredoxin-like monomeric fold (KaiB(fs)). KaiB(fs) binds phospho-KaiC, KaiA and CikA. KaiA and CikA compete for binding to KaiB(fs), and KaiB(fs) and SasA compete for binding to KaiC, thus the clock oscillator and output signal pathway are tightly coupled. The polypeptide is Circadian clock oscillator protein KaiB (Parasynechococcus marenigrum (strain WH8102)).